Consider the following 295-residue polypeptide: Ribosomal protein L11 methyltransferase (295 aa).

Positions 138, 161, 183, and 230 each coordinate S-adenosyl-L-methionine.

The protein belongs to the methyltransferase superfamily. PrmA family.

It is found in the cytoplasm. It catalyses the reaction L-lysyl-[protein] + 3 S-adenosyl-L-methionine = N(6),N(6),N(6)-trimethyl-L-lysyl-[protein] + 3 S-adenosyl-L-homocysteine + 3 H(+). Functionally, methylates ribosomal protein L11. The protein is Ribosomal protein L11 methyltransferase of Rhodopseudomonas palustris (strain BisB5).